The following is a 213-amino-acid chain: Thymidylate kinase (213 aa).

An ATP-binding site is contributed by 10-17 (GLEGAGKT).

It belongs to the thymidylate kinase family.

It catalyses the reaction dTMP + ATP = dTDP + ADP. Functionally, phosphorylation of dTMP to form dTDP in both de novo and salvage pathways of dTTP synthesis. The protein is Thymidylate kinase of Salmonella dublin (strain CT_02021853).